The sequence spans 77 residues: uncharacterized protein (77 aa).

Positions 54–77 (HHGRKHKEDMEARHEQLTKGGTIL) are disordered. Over residues 59-70 (HKEDMEARHEQL) the composition is skewed to basic and acidic residues.

This is an uncharacterized protein from Escherichia coli O157:H7.